We begin with the raw amino-acid sequence, 382 residues long: GDP-mannose-dependent alpha-(1-6)-phosphatidylinositol monomannoside mannosyltransferase (382 aa).

Arginine 200, lysine 205, isoleucine 257, and glutamate 294 together coordinate GDP-alpha-D-mannose.

Belongs to the glycosyltransferase group 1 family. Glycosyltransferase 4 subfamily.

It carries out the reaction a 1,2-diacyl-sn-glycero-3-phospho-[alpha-D-mannopyranosyl-(1&lt;-&gt;6)-D-myo-inositol] + GDP-alpha-D-mannose = a 2,6-O-bis(alpha-D-mannopyranosyl)-1-phosphatidyl-1D-myo-inositol + GDP + H(+). The enzyme catalyses a 1,2-diacyl-sn-glycero-3-phospho-[alpha-D-6-acyl-mannopyranosyl-(1&lt;-&gt;6)-D-myo-inositol] + GDP-alpha-D-mannose = a 2-O-(alpha-D-mannosyl)-6-O-(6-O-acyl-alpha-D-mannosyl)-1-phosphatidyl-1D-myo-inositol + GDP + H(+). Its pathway is phospholipid metabolism; phosphatidylinositol metabolism. Functionally, involved in the biosynthesis of phosphatidyl-myo-inositol mannosides (PIM) which are early precursors in the biosynthesis of lipomannans (LM) and lipoarabinomannans (LAM). Catalyzes the addition of a mannosyl residue from GDP-D-mannose (GDP-Man) to the position 6 of a phosphatidyl-myo-inositol bearing an alpha-1,2-linked mannose residue (PIM1) to generate phosphatidyl-myo-inositol bearing alpha-1,2- and alpha-1,6-linked mannose residues (Ac1PIM2). PimB also catalyzes the addition of a mannosyl residue from GDP-Man to the position 6 of phosphatidyl-myo-inositol bearing an acylated alpha-1,2-linked mannose residue (Ac1PIM1) to generate monoacylated phosphatidyl-myo-inositol bearing alpha-1,2- and alpha-1,6-linked mannose residues (Ac1PIM2). The addition of the second mannosyl residue by PimB preferentially occurs before the acylation of the mannosyl residue transferred by PimA. Also able to transfer a mannosyl residue from GDP-Man to the position 6 of a phosphatidyl-myo-inositol (PI), but this reaction is very slow. This Mycolicibacterium smegmatis (strain ATCC 700084 / mc(2)155) (Mycobacterium smegmatis) protein is GDP-mannose-dependent alpha-(1-6)-phosphatidylinositol monomannoside mannosyltransferase.